Reading from the N-terminus, the 135-residue chain is MACGLVASNLNLKPGECLRVRGEVAADAKSFLLNLGKDDNNLCLHFNPRFNAHGDVNTIVCNSKDAGAWGAEQRESAFPFQPGSVVEVCISFNQTDLTIKLPDGYEFKFPNRLNLEAINYLSAGGDFKIKCVAFE.

Position 2 is an N-acetylalanine (Ala-2). The region spanning 4 to 135 (GLVASNLNLK…DFKIKCVAFE (132 aa)) is the Galectin domain. Residues Lys-13 and Lys-29 each carry the N6-acetyllysine modification. At Ser-30 the chain carries Phosphoserine. A beta-D-galactoside contacts are provided by residues 45 to 49 (HFNPR), His-53, Asn-62, and 69 to 72 (WGAE). Lys-108 bears the N6-acetyllysine; alternate mark. Position 108 is an N6-succinyllysine; alternate (Lys-108). The residue at position 128 (Lys-128) is an N6-acetyllysine.

Homodimer. Binds LGALS3BP. Interacts with CD2, CD3, CD4, CD6, CD7, CD43, ALCAM and CD45. Interacts with laminin (via poly-N-acetyllactosamine). Interacts with SUSD2. Interacts with cargo receptor TMED10; the interaction mediates the translocation from the cytoplasm into the ERGIC (endoplasmic reticulum-Golgi intermediate compartment) and thereby secretion.

It localises to the secreted. It is found in the extracellular space. The protein resides in the extracellular matrix. Its subcellular location is the cytoplasm. Lectin that binds beta-galactoside and a wide array of complex carbohydrates. Plays a role in regulating apoptosis, cell proliferation and cell differentiation. Inhibits CD45 protein phosphatase activity and therefore the dephosphorylation of Lyn kinase. Strong inducer of T-cell apoptosis. The protein is Galectin-1 (LGALS1) of Bos taurus (Bovine).